Here is a 197-residue protein sequence, read N- to C-terminus: Holliday junction branch migration complex subunit RuvA (197 aa).

Residues M1–K61 are domain I. The segment at S62–E140 is domain II. The segment at D141–A150 is flexible linker. Positions A150–K197 are domain III.

Belongs to the RuvA family. As to quaternary structure, homotetramer. Forms an RuvA(8)-RuvB(12)-Holliday junction (HJ) complex. HJ DNA is sandwiched between 2 RuvA tetramers; dsDNA enters through RuvA and exits via RuvB. An RuvB hexamer assembles on each DNA strand where it exits the tetramer. Each RuvB hexamer is contacted by two RuvA subunits (via domain III) on 2 adjacent RuvB subunits; this complex drives branch migration. In the full resolvosome a probable DNA-RuvA(4)-RuvB(12)-RuvC(2) complex forms which resolves the HJ.

The protein resides in the cytoplasm. In terms of biological role, the RuvA-RuvB-RuvC complex processes Holliday junction (HJ) DNA during genetic recombination and DNA repair, while the RuvA-RuvB complex plays an important role in the rescue of blocked DNA replication forks via replication fork reversal (RFR). RuvA specifically binds to HJ cruciform DNA, conferring on it an open structure. The RuvB hexamer acts as an ATP-dependent pump, pulling dsDNA into and through the RuvAB complex. HJ branch migration allows RuvC to scan DNA until it finds its consensus sequence, where it cleaves and resolves the cruciform DNA. The polypeptide is Holliday junction branch migration complex subunit RuvA (Lactobacillus delbrueckii subsp. bulgaricus (strain ATCC BAA-365 / Lb-18)).